The primary structure comprises 489 residues: FAD-linked oxidoreductase tazG (489 aa).

An N-terminal signal peptide occupies residues 1 to 17 (MVAFSAILQTALGLSAA). N38 carries an N-linked (GlcNAc...) asparagine glycan. Residues 55–224 (APSYGAGAIK…TSATYRLPEV (170 aa)) form the FAD-binding PCMH-type domain. N-linked (GlcNAc...) asparagine glycans are attached at residues N242 and N306.

The protein belongs to the oxygen-dependent FAD-linked oxidoreductase family. FAD is required as a cofactor.

The protein operates within secondary metabolite biosynthesis. Its function is as follows. FAD-linked oxidoreductase; part of the gene cluster that mediates the biosynthesis of azaterrilone A and other azaphilones, a class of fungal metabolites characterized by a highly oxygenated pyrano-quinone bicyclic core and exhibiting a broad range of bioactivities. The first step of the pathway begins with the non-reducing polyketide synthase tazA that assembles one acetyl-CoA starter unit, five malonyl-CoA units, and catalyzes a series of Claisen condensations, methylation, PT-mediated cyclization, and finally releases the first hexaketide precursor through the R-domain. The tazA product then undergoes reduction on its terminal ketone and the following pyran-ring formation by yet undetermined enzyme(s). Dehydration and enoyl reduction, possibly involving the trans-enoyl reductase tazE leads to the next intermediate. TazD is predicted as an acetyltransferase and might catalyze the acetylation steps leading to the synthesis of azaterrilone A. Azaterrilone A is not the final product of the taz pathway and both the highly reducing polyketide synthase tazB and the dual enzyme tazHJ catalyze late steps of the pathway, leading to the production of the 2 final stereoisomers that contain additional polyketide modification whose structures have still to be determined. The sequence is that of FAD-linked oxidoreductase tazG from Aspergillus terreus (strain NIH 2624 / FGSC A1156).